A 328-amino-acid chain; its full sequence is UDP-glucose 4-epimerase (328 aa).

Residue threonine 119 coordinates substrate. Tyrosine 143 functions as the Proton acceptor in the catalytic mechanism.

Belongs to the NAD(P)-dependent epimerase/dehydratase family. NAD(+) is required as a cofactor.

It catalyses the reaction UDP-alpha-D-glucose = UDP-alpha-D-galactose. It functions in the pathway carbohydrate metabolism; galactose metabolism. It participates in glycan metabolism; exopolysaccharide biosynthesis. This Rhizobium meliloti (strain 1021) (Ensifer meliloti) protein is UDP-glucose 4-epimerase (exoB).